Here is a 126-residue protein sequence, read N- to C-terminus: Holo-[acyl-carrier-protein] synthase (126 aa).

Positions 9 and 58 each coordinate Mg(2+).

This sequence belongs to the P-Pant transferase superfamily. AcpS family. Mg(2+) serves as cofactor.

The protein localises to the cytoplasm. It carries out the reaction apo-[ACP] + CoA = holo-[ACP] + adenosine 3',5'-bisphosphate + H(+). In terms of biological role, transfers the 4'-phosphopantetheine moiety from coenzyme A to a Ser of acyl-carrier-protein. The polypeptide is Holo-[acyl-carrier-protein] synthase (Shewanella frigidimarina (strain NCIMB 400)).